The sequence spans 159 residues: NADH-quinone oxidoreductase subunit I (159 aa).

2 consecutive 4Fe-4S ferredoxin-type domains span residues 51–80 and 90–119; these read RRYENGEERCIACKLCEAICPAQAIVIEAD and TRYDIDMTKCIYCGLCQEACPVDAIVEGPN. Positions 60, 63, 66, 70, 99, 102, 105, and 109 each coordinate [4Fe-4S] cluster.

It belongs to the complex I 23 kDa subunit family. In terms of assembly, NDH-1 is composed of 14 different subunits. Subunits NuoA, H, J, K, L, M, N constitute the membrane sector of the complex. The cofactor is [4Fe-4S] cluster.

It is found in the cell membrane. It catalyses the reaction a quinone + NADH + 5 H(+)(in) = a quinol + NAD(+) + 4 H(+)(out). In terms of biological role, NDH-1 shuttles electrons from NADH, via FMN and iron-sulfur (Fe-S) centers, to quinones in the respiratory chain. The immediate electron acceptor for the enzyme in this species is believed to be ubiquinone. Couples the redox reaction to proton translocation (for every two electrons transferred, four hydrogen ions are translocated across the cytoplasmic membrane), and thus conserves the redox energy in a proton gradient. The chain is NADH-quinone oxidoreductase subunit I from Rickettsia africae (strain ESF-5).